A 294-amino-acid polypeptide reads, in one-letter code: Proline iminopeptidase (294 aa).

In terms of domain architecture, AB hydrolase-1 spans 28–278; the sequence is PLLLLHGGPG…GCGHMPFVQE (251 aa). Ser106 acts as the Nucleophile in catalysis. The active site involves Asp245. Catalysis depends on His272, which acts as the Proton donor.

This sequence belongs to the peptidase S33 family. Homotrimer.

It localises to the cell envelope. It carries out the reaction Release of N-terminal proline from a peptide.. Inhibited by 3,4-DCI, but no significant effect on enzyme activity by pepstatin A, E-64, 1,10-phenanthroline or EDTA. Its function is as follows. Releases the N-terminal proline from various substrates. Cleaves Pro-betaNA (L-prolyl-beta-naphthylamide) effectively. The chain is Proline iminopeptidase (pip) from Lactobacillus delbrueckii subsp. lactis.